The chain runs to 282 residues: HTH-type transcriptional activator RhaR (282 aa).

In terms of domain architecture, HTH araC/xylS-type spans 179 to 277; the sequence is DKLITALANS…GMTPSQWRHL (99 aa). 2 DNA-binding regions (H-T-H motif) span residues 196-217 and 244-267; these read DAFC…RAQT and ISEI…TRET.

Binds DNA as a dimer.

The protein resides in the cytoplasm. Activates expression of the rhaSR operon in response to L-rhamnose. The polypeptide is HTH-type transcriptional activator RhaR (Salmonella arizonae (strain ATCC BAA-731 / CDC346-86 / RSK2980)).